The chain runs to 472 residues: tRNA-2-methylthio-N(6)-dimethylallyladenosine synthase (472 aa).

The segment at 1 to 24 (MTGTPDVFPPATPGGAPLVALPAG) is disordered. An MTTase N-terminal domain is found at 33-150 (GKLYIKTHGC…LPELIRARRE (118 aa)). [4Fe-4S] cluster is bound by residues Cys-42, Cys-79, Cys-113, Cys-187, Cys-191, and Cys-194. The Radical SAM core domain maps to 173-407 (RAEGASAFVS…RINAHAAGIS (235 aa)). The 64-residue stretch at 408-471 (EKMVGTVQTV…TNSLRARVVA (64 aa)) folds into the TRAM domain.

The protein belongs to the methylthiotransferase family. MiaB subfamily. As to quaternary structure, monomer. The cofactor is [4Fe-4S] cluster.

Its subcellular location is the cytoplasm. It catalyses the reaction N(6)-dimethylallyladenosine(37) in tRNA + (sulfur carrier)-SH + AH2 + 2 S-adenosyl-L-methionine = 2-methylsulfanyl-N(6)-dimethylallyladenosine(37) in tRNA + (sulfur carrier)-H + 5'-deoxyadenosine + L-methionine + A + S-adenosyl-L-homocysteine + 2 H(+). Catalyzes the methylthiolation of N6-(dimethylallyl)adenosine (i(6)A), leading to the formation of 2-methylthio-N6-(dimethylallyl)adenosine (ms(2)i(6)A) at position 37 in tRNAs that read codons beginning with uridine. In Stenotrophomonas maltophilia (strain K279a), this protein is tRNA-2-methylthio-N(6)-dimethylallyladenosine synthase.